Reading from the N-terminus, the 431-residue chain is UDP-N-acetylglucosamine 1-carboxyvinyltransferase (431 aa).

Residue 24–25 (KN) participates in phosphoenolpyruvate binding. Arg95 contacts UDP-N-acetyl-alpha-D-glucosamine. Asp119 functions as the Proton donor in the catalytic mechanism. UDP-N-acetyl-alpha-D-glucosamine contacts are provided by Asp314 and Met336.

The protein belongs to the EPSP synthase family. MurA subfamily.

It is found in the cytoplasm. The catalysed reaction is phosphoenolpyruvate + UDP-N-acetyl-alpha-D-glucosamine = UDP-N-acetyl-3-O-(1-carboxyvinyl)-alpha-D-glucosamine + phosphate. Its pathway is cell wall biogenesis; peptidoglycan biosynthesis. Its function is as follows. Cell wall formation. Adds enolpyruvyl to UDP-N-acetylglucosamine. This chain is UDP-N-acetylglucosamine 1-carboxyvinyltransferase, found in Bradyrhizobium diazoefficiens (strain JCM 10833 / BCRC 13528 / IAM 13628 / NBRC 14792 / USDA 110).